The primary structure comprises 271 residues: Formamidopyrimidine-DNA glycosylase (271 aa).

P2 serves as the catalytic Schiff-base intermediate with DNA. Residue E3 is the Proton donor of the active site. The active-site Proton donor; for beta-elimination activity is K58. The DNA site is built by H91, R110, and R152. The segment at 237 to 271 (RVYGRTGLACMACETPVKQIVQGNRSTYYCPACQR) adopts an FPG-type zinc-finger fold. The Proton donor; for delta-elimination activity role is filled by R261.

This sequence belongs to the FPG family. In terms of assembly, monomer. Zn(2+) serves as cofactor.

It carries out the reaction Hydrolysis of DNA containing ring-opened 7-methylguanine residues, releasing 2,6-diamino-4-hydroxy-5-(N-methyl)formamidopyrimidine.. It catalyses the reaction 2'-deoxyribonucleotide-(2'-deoxyribose 5'-phosphate)-2'-deoxyribonucleotide-DNA = a 3'-end 2'-deoxyribonucleotide-(2,3-dehydro-2,3-deoxyribose 5'-phosphate)-DNA + a 5'-end 5'-phospho-2'-deoxyribonucleoside-DNA + H(+). In terms of biological role, involved in base excision repair of DNA damaged by oxidation or by mutagenic agents. Acts as a DNA glycosylase that recognizes and removes damaged bases. Has a preference for oxidized purines, such as 7,8-dihydro-8-oxoguanine (8-oxoG). Has AP (apurinic/apyrimidinic) lyase activity and introduces nicks in the DNA strand. Cleaves the DNA backbone by beta-delta elimination to generate a single-strand break at the site of the removed base with both 3'- and 5'-phosphates. In Thioalkalivibrio sulfidiphilus (strain HL-EbGR7), this protein is Formamidopyrimidine-DNA glycosylase.